The chain runs to 761 residues: Xaa-Pro dipeptidyl-peptidase (761 aa).

Catalysis depends on charge relay system residues serine 347, aspartate 467, and histidine 497.

This sequence belongs to the peptidase S15 family. As to quaternary structure, homodimer.

The protein localises to the cytoplasm. The catalysed reaction is Hydrolyzes Xaa-Pro-|- bonds to release unblocked, N-terminal dipeptides from substrates including Ala-Pro-|-p-nitroanilide and (sequentially) Tyr-Pro-|-Phe-Pro-|-Gly-Pro-|-Ile.. Its function is as follows. Removes N-terminal dipeptides sequentially from polypeptides having unsubstituted N-termini provided that the penultimate residue is proline. The chain is Xaa-Pro dipeptidyl-peptidase from Streptococcus agalactiae serotype III (strain NEM316).